The sequence spans 131 residues: D-ribose pyranase (131 aa).

The active-site Proton donor is the H20. Substrate contacts are provided by residues D28, H98, and 120–122 (FSN).

Belongs to the RbsD / FucU family. RbsD subfamily. Homodecamer.

It is found in the cytoplasm. The catalysed reaction is beta-D-ribopyranose = beta-D-ribofuranose. Its pathway is carbohydrate metabolism; D-ribose degradation; D-ribose 5-phosphate from beta-D-ribopyranose: step 1/2. Functionally, catalyzes the interconversion of beta-pyran and beta-furan forms of D-ribose. This is D-ribose pyranase from Petrotoga mobilis (strain DSM 10674 / SJ95).